The following is a 191-amino-acid chain: dTTP/UTP pyrophosphatase (191 aa).

D75 serves as the catalytic Proton acceptor.

It belongs to the Maf family. YhdE subfamily. A divalent metal cation is required as a cofactor.

The protein localises to the cytoplasm. The catalysed reaction is dTTP + H2O = dTMP + diphosphate + H(+). It catalyses the reaction UTP + H2O = UMP + diphosphate + H(+). Functionally, nucleoside triphosphate pyrophosphatase that hydrolyzes dTTP and UTP. May have a dual role in cell division arrest and in preventing the incorporation of modified nucleotides into cellular nucleic acids. The sequence is that of dTTP/UTP pyrophosphatase from Aliivibrio fischeri (strain ATCC 700601 / ES114) (Vibrio fischeri).